We begin with the raw amino-acid sequence, 74 residues long: Translational regulator CsrA (74 aa).

Belongs to the CsrA/RsmA family. As to quaternary structure, homodimer. The beta-strands of each monomer intercalate to form a hydrophobic core while the alpha-helices form wings that extend away from the core. Two molecules of FliW interact with 1 homodimer. mRNA and FliW bind to different sites on CsrA.

It is found in the cytoplasm. A translational regulator that binds mRNA to regulate translation initiation and/or mRNA stability. Usually binds in the 5'-UTR at or near the Shine-Dalgarno sequence preventing ribosome-binding, thus repressing translation. Represses expression of flagellin (hag) in a post-transcriptional fashion. Specifically binds to 2 sites in the 5'-UTR of hag mRNA in a cooperative fashion; the second site overlaps the Shine-Dalgarno sequence and prevents 30S ribosomal subunit binding. Mutation of either binding site abolishes CsrA regulation of hag expression. Repression is greater in the 1A96 than 168 genetic background and higher in minimal than rich medium. Translation repression is antagonized by FliW. Partner switching by flagellin between FliW and CsrA provides a flagellar assembly checkpoint to tightly control the timing of flagellin synthesis. Flagellin binds to assembly factor FliW, freeing CsrA to repress translation of the flagellin mRNA. When the flagellar hook is assembled flagellin is secreted, depleting intracellular flagellin, which frees FliW to interact with CsrA and inhibits CsrA binding to mRNA. This derepresses flagellin translation and provides protein for flagellar assembly. Once the flagellar filament is completed cytoplasmic flagellin levels rise and CsrA translation repression of flagellin reinitiates. Overexpression leads to a dramatic reduction in motility, a significant reduction in flagellin synthesis and reduced flagella assembly. The protein is Translational regulator CsrA of Bacillus subtilis (strain 168).